Consider the following 355-residue polypeptide: Probable aldo-keto reductase 3 (355 aa).

The active-site Proton donor is the Y70. H138 contributes to the substrate binding site. Residue S217–G227 coordinates NADP(+).

This sequence belongs to the aldo/keto reductase family.

The polypeptide is Probable aldo-keto reductase 3 (Oryza sativa subsp. japonica (Rice)).